The primary structure comprises 710 residues: Bifunctional sesterterpene synthase (710 aa).

The stellata-2,6,19-trien synthase stretch occupies residues 1-327; that stretch reads MEFKFSAVVD…RYYTDASFSE (327 aa). Mg(2+)-binding residues include D92 and D96. Substrate contacts are provided by residues D92, D96, 181–184, and 229–233; these read RVHD and SWDKE. The short motif at 92 to 96 is the DDXXD motif 1 element; it reads DDVTD. An NSE motif motif is present at residues 278 to 286; the sequence is YLRVFEEVK. Position 318 to 319 (318 to 319) interacts with substrate; the sequence is RY. The tract at residues 328-709 is geranylgeranyl diphosphate synthase; it reads RQLEWMKNGI…LRLIFELLRN (382 aa). The segment at 365–404 is disordered; sequence HHAVTSNGTGTGSHDTLNGDGTAHENNSRDASIPGRTTNG. Over residues 368–380 the composition is skewed to polar residues; the sequence is VTSNGTGTGSHDT. K430, R433, and H462 together coordinate isopentenyl diphosphate. Residues D469 and D473 each contribute to the Mg(2+) site. Residues 469-473 carry the DDXXD motif 2 motif; the sequence is DDLED. R478 contacts dimethylallyl diphosphate. Residue R479 coordinates isopentenyl diphosphate. 6 residues coordinate dimethylallyl diphosphate: K556, T557, Q592, N599, K609, and K619.

This sequence in the C-terminal section; belongs to the FPP/GGPP synthase family. It in the N-terminal section; belongs to the terpene synthase family. As to quaternary structure, hexamer.

It catalyses the reaction 4 isopentenyl diphosphate + dimethylallyl diphosphate = (2E,6E,10E,14E)-geranylfarnesyl diphosphate + 4 diphosphate. The catalysed reaction is (2E,6E,10E,14E)-geranylfarnesyl diphosphate = variecoladiene + diphosphate. It functions in the pathway secondary metabolite biosynthesis; terpenoid biosynthesis. Multifunctional sesterterpene synthase; part of the gene cluster that mediates the biosynthesis of the sesterterpene variecolin. The first step in the pathway is performed by the variecoladiene synthase vrcA that possesses both prenyl transferase and terpene cyclase activity, converting isopentenyl diphosphate and dimethylallyl diphosphate into geranylfarnesyl pyrophosphate (GFPP) and then converting GFPP into the tetracyclic variecoladiene. The cytochrome P450 monooxygenase vrcB then catalyzes multiple oxidations at C-5 and C-20 positions to yield variecolin. The chain is Bifunctional sesterterpene synthase from Aspergillus aculeatus (strain ATCC 16872 / CBS 172.66 / WB 5094).